A 220-amino-acid polypeptide reads, in one-letter code: Putative phosphatase YhcW (220 aa).

D8 (nucleophile) is an active-site residue. D8, D10, and D166 together coordinate a divalent metal cation. The active-site Proton donor is the D10.

It belongs to the HAD-like hydrolase superfamily. CbbY/CbbZ/Gph/YieH family. The cofactor is a divalent metal cation.

The chain is Putative phosphatase YhcW (yhcW) from Bacillus subtilis (strain 168).